Here is a 110-residue protein sequence, read N- to C-terminus: PHD finger-like domain-containing protein 5B (110 aa).

Belongs to the PHF5 family.

This is PHD finger-like domain-containing protein 5B from Arabidopsis thaliana (Mouse-ear cress).